Consider the following 367-residue polypeptide: Cobalt-precorrin-5B C(1)-methyltransferase (367 aa).

This sequence belongs to the CbiD family.

The enzyme catalyses Co-precorrin-5B + S-adenosyl-L-methionine = Co-precorrin-6A + S-adenosyl-L-homocysteine. It participates in cofactor biosynthesis; adenosylcobalamin biosynthesis; cob(II)yrinate a,c-diamide from sirohydrochlorin (anaerobic route): step 6/10. Its function is as follows. Catalyzes the methylation of C-1 in cobalt-precorrin-5B to form cobalt-precorrin-6A. This Priestia megaterium (Bacillus megaterium) protein is Cobalt-precorrin-5B C(1)-methyltransferase.